The sequence spans 341 residues: UDP-3-O-acylglucosamine N-acyltransferase (341 aa).

The Proton acceptor role is filled by His239.

The protein belongs to the transferase hexapeptide repeat family. LpxD subfamily. In terms of assembly, homotrimer.

The catalysed reaction is a UDP-3-O-[(3R)-3-hydroxyacyl]-alpha-D-glucosamine + a (3R)-hydroxyacyl-[ACP] = a UDP-2-N,3-O-bis[(3R)-3-hydroxyacyl]-alpha-D-glucosamine + holo-[ACP] + H(+). It functions in the pathway bacterial outer membrane biogenesis; LPS lipid A biosynthesis. Catalyzes the N-acylation of UDP-3-O-acylglucosamine using 3-hydroxyacyl-ACP as the acyl donor. Is involved in the biosynthesis of lipid A, a phosphorylated glycolipid that anchors the lipopolysaccharide to the outer membrane of the cell. The chain is UDP-3-O-acylglucosamine N-acyltransferase from Shewanella oneidensis (strain ATCC 700550 / JCM 31522 / CIP 106686 / LMG 19005 / NCIMB 14063 / MR-1).